The following is a 444-amino-acid chain: Phosphoglucosamine mutase (444 aa).

Ser-103 acts as the Phosphoserine intermediate in catalysis. Mg(2+) contacts are provided by Ser-103, Asp-241, Asp-243, and Asp-245. Residue Ser-103 is modified to Phosphoserine.

This sequence belongs to the phosphohexose mutase family. Mg(2+) serves as cofactor. In terms of processing, activated by phosphorylation.

The catalysed reaction is alpha-D-glucosamine 1-phosphate = D-glucosamine 6-phosphate. Catalyzes the conversion of glucosamine-6-phosphate to glucosamine-1-phosphate. The sequence is that of Phosphoglucosamine mutase from Deinococcus radiodurans (strain ATCC 13939 / DSM 20539 / JCM 16871 / CCUG 27074 / LMG 4051 / NBRC 15346 / NCIMB 9279 / VKM B-1422 / R1).